The primary structure comprises 212 residues: Small ribosomal subunit protein eS1 (212 aa).

The protein belongs to the eukaryotic ribosomal protein eS1 family.

The chain is Small ribosomal subunit protein eS1 from Staphylothermus marinus (strain ATCC 43588 / DSM 3639 / JCM 9404 / F1).